We begin with the raw amino-acid sequence, 492 residues long: Glutamate--cysteine ligase A, chloroplastic (492 aa).

Residues cysteine 156 and cysteine 376 are joined by a disulfide bond.

The protein belongs to the carboxylate-amine ligase family. Glutamate--cysteine ligase type 2 subfamily. Homodimer or monomer when oxidized or reduced, respectively. Post-translationally, the Cys-156-Cys-376 disulfide bridge is known to modulate the enzyme activity according to the redox status. The oxidized form constitutes the active enzyme.

The protein localises to the plastid. It is found in the chloroplast. The catalysed reaction is L-cysteine + L-glutamate + ATP = gamma-L-glutamyl-L-cysteine + ADP + phosphate + H(+). It functions in the pathway sulfur metabolism; glutathione biosynthesis; glutathione from L-cysteine and L-glutamate: step 1/2. The polypeptide is Glutamate--cysteine ligase A, chloroplastic (GSH1-1) (Oryza sativa subsp. indica (Rice)).